The sequence spans 209 residues: Ribosomal RNA large subunit methyltransferase E (209 aa).

Positions 63, 65, 83, 99, and 124 each coordinate S-adenosyl-L-methionine. Lys-164 (proton acceptor) is an active-site residue.

The protein belongs to the class I-like SAM-binding methyltransferase superfamily. RNA methyltransferase RlmE family.

It localises to the cytoplasm. It carries out the reaction uridine(2552) in 23S rRNA + S-adenosyl-L-methionine = 2'-O-methyluridine(2552) in 23S rRNA + S-adenosyl-L-homocysteine + H(+). Its function is as follows. Specifically methylates the uridine in position 2552 of 23S rRNA at the 2'-O position of the ribose in the fully assembled 50S ribosomal subunit. This chain is Ribosomal RNA large subunit methyltransferase E, found in Shewanella baltica (strain OS223).